Consider the following 314-residue polypeptide: tRNA dimethylallyltransferase (314 aa).

10–17 (GPTAVGKT) contacts ATP. 12-17 (TAVGKT) is a binding site for substrate. The tract at residues 35–38 (DSMQ) is interaction with substrate tRNA.

Belongs to the IPP transferase family. In terms of assembly, monomer. Mg(2+) is required as a cofactor.

It catalyses the reaction adenosine(37) in tRNA + dimethylallyl diphosphate = N(6)-dimethylallyladenosine(37) in tRNA + diphosphate. Functionally, catalyzes the transfer of a dimethylallyl group onto the adenine at position 37 in tRNAs that read codons beginning with uridine, leading to the formation of N6-(dimethylallyl)adenosine (i(6)A). This Clostridium novyi (strain NT) protein is tRNA dimethylallyltransferase.